The primary structure comprises 162 residues: Phosphopantetheine adenylyltransferase (162 aa).

Thr9 serves as a coordination point for substrate. ATP is bound by residues 9-10 (TF) and His17. Residues Lys41, Leu76, and Arg90 each coordinate substrate. Residues 91 to 93 (GLR), Glu101, and 126 to 132 (HQAIASR) each bind ATP.

The protein belongs to the bacterial CoaD family. In terms of assembly, homohexamer. It depends on Mg(2+) as a cofactor.

The protein resides in the cytoplasm. The enzyme catalyses (R)-4'-phosphopantetheine + ATP + H(+) = 3'-dephospho-CoA + diphosphate. It participates in cofactor biosynthesis; coenzyme A biosynthesis; CoA from (R)-pantothenate: step 4/5. In terms of biological role, reversibly transfers an adenylyl group from ATP to 4'-phosphopantetheine, yielding dephospho-CoA (dPCoA) and pyrophosphate. In Caulobacter sp. (strain K31), this protein is Phosphopantetheine adenylyltransferase.